A 329-amino-acid polypeptide reads, in one-letter code: Glycerol-3-phosphate dehydrogenase [NAD(P)+] (329 aa).

4 residues coordinate NADPH: Ser10, Trp11, Arg31, and Lys105. Lys105, Gly134, and Ser136 together coordinate sn-glycerol 3-phosphate. Ala138 is an NADPH binding site. Sn-glycerol 3-phosphate-binding residues include Lys189, Asp242, Ser252, Arg253, and Asn254. Residue Lys189 is the Proton acceptor of the active site. Arg253 lines the NADPH pocket. Residues Val277 and Glu279 each coordinate NADPH.

The protein belongs to the NAD-dependent glycerol-3-phosphate dehydrogenase family.

Its subcellular location is the cytoplasm. The catalysed reaction is sn-glycerol 3-phosphate + NAD(+) = dihydroxyacetone phosphate + NADH + H(+). The enzyme catalyses sn-glycerol 3-phosphate + NADP(+) = dihydroxyacetone phosphate + NADPH + H(+). The protein operates within membrane lipid metabolism; glycerophospholipid metabolism. Functionally, catalyzes the reduction of the glycolytic intermediate dihydroxyacetone phosphate (DHAP) to sn-glycerol 3-phosphate (G3P), the key precursor for phospholipid synthesis. This is Glycerol-3-phosphate dehydrogenase [NAD(P)+] from Neisseria meningitidis serogroup C (strain 053442).